We begin with the raw amino-acid sequence, 555 residues long: CTP synthase (555 aa).

An amidoligase domain region spans residues Met1–Ile271. Ser19 lines the CTP pocket. Ser19 contacts UTP. ATP is bound by residues Ser20–Leu25 and Asp77. Mg(2+) is bound by residues Asp77 and Glu145. Residues Asp152 to Glu154, Lys192 to Gln197, and Lys228 contribute to the CTP site. Residues Lys192–Gln197 and Lys228 each bind UTP. Positions Arg297 to Gln538 constitute a Glutamine amidotransferase type-1 domain. Gly358 is an L-glutamine binding site. Cys385 functions as the Nucleophile; for glutamine hydrolysis in the catalytic mechanism. L-glutamine-binding positions include Leu386–Gln389, Glu409, and Arg466. Catalysis depends on residues His511 and Glu513.

It belongs to the CTP synthase family. Homotetramer.

It carries out the reaction UTP + L-glutamine + ATP + H2O = CTP + L-glutamate + ADP + phosphate + 2 H(+). The enzyme catalyses L-glutamine + H2O = L-glutamate + NH4(+). It catalyses the reaction UTP + NH4(+) + ATP = CTP + ADP + phosphate + 2 H(+). Its pathway is pyrimidine metabolism; CTP biosynthesis via de novo pathway; CTP from UDP: step 2/2. Allosterically activated by GTP, when glutamine is the substrate; GTP has no effect on the reaction when ammonia is the substrate. The allosteric effector GTP functions by stabilizing the protein conformation that binds the tetrahedral intermediate(s) formed during glutamine hydrolysis. Inhibited by the product CTP, via allosteric rather than competitive inhibition. Functionally, catalyzes the ATP-dependent amination of UTP to CTP with either L-glutamine or ammonia as the source of nitrogen. Regulates intracellular CTP levels through interactions with the four ribonucleotide triphosphates. In Anaeromyxobacter sp. (strain Fw109-5), this protein is CTP synthase.